The chain runs to 262 residues: 4-hydroxy-2-oxo-heptane-1,7-dioate aldolase (262 aa).

His-45 acts as the Proton acceptor in catalysis. Gln-147 lines the substrate pocket. Glu-149 contacts a divalent metal cation. Residues Ala-174 and Asp-175 each contribute to the substrate site. Asp-175 contributes to the a divalent metal cation binding site.

The protein belongs to the HpcH/HpaI aldolase family. Homohexamer; trimer of dimers. Requires a divalent metal cation as cofactor.

It catalyses the reaction 4-hydroxy-2-oxoheptanedioate = succinate semialdehyde + pyruvate. It participates in aromatic compound metabolism; 4-hydroxyphenylacetate degradation; pyruvate and succinate semialdehyde from 4-hydroxyphenylacetate: step 7/7. In terms of biological role, catalyzes the reversible retro-aldol cleavage of 4-hydroxy-2-ketoheptane-1,7-dioate (HKHD) to pyruvate and succinic semialdehyde. The sequence is that of 4-hydroxy-2-oxo-heptane-1,7-dioate aldolase from Shigella sonnei (strain Ss046).